We begin with the raw amino-acid sequence, 320 residues long: Cytochrome f (320 aa).

Positions Met-1–Ala-35 are cleaved as a signal peptide. Heme contacts are provided by Tyr-36, Cys-56, Cys-59, and His-60. A helical transmembrane segment spans residues Val-286–Leu-305.

It belongs to the cytochrome f family. The 4 large subunits of the cytochrome b6-f complex are cytochrome b6, subunit IV (17 kDa polypeptide, petD), cytochrome f and the Rieske protein, while the 4 small subunits are PetG, PetL, PetM and PetN. The complex functions as a dimer. It depends on heme as a cofactor.

Its subcellular location is the plastid. The protein resides in the chloroplast thylakoid membrane. Functionally, component of the cytochrome b6-f complex, which mediates electron transfer between photosystem II (PSII) and photosystem I (PSI), cyclic electron flow around PSI, and state transitions. This Zea mays (Maize) protein is Cytochrome f (petA).